The primary structure comprises 254 residues: Imidazole glycerol phosphate synthase subunit HisF (254 aa).

Residues D11 and D130 contribute to the active site.

This sequence belongs to the HisA/HisF family. In terms of assembly, heterodimer of HisH and HisF.

It localises to the cytoplasm. It carries out the reaction 5-[(5-phospho-1-deoxy-D-ribulos-1-ylimino)methylamino]-1-(5-phospho-beta-D-ribosyl)imidazole-4-carboxamide + L-glutamine = D-erythro-1-(imidazol-4-yl)glycerol 3-phosphate + 5-amino-1-(5-phospho-beta-D-ribosyl)imidazole-4-carboxamide + L-glutamate + H(+). The protein operates within amino-acid biosynthesis; L-histidine biosynthesis; L-histidine from 5-phospho-alpha-D-ribose 1-diphosphate: step 5/9. In terms of biological role, IGPS catalyzes the conversion of PRFAR and glutamine to IGP, AICAR and glutamate. The HisF subunit catalyzes the cyclization activity that produces IGP and AICAR from PRFAR using the ammonia provided by the HisH subunit. This chain is Imidazole glycerol phosphate synthase subunit HisF, found in Laribacter hongkongensis (strain HLHK9).